Here is a 419-residue protein sequence, read N- to C-terminus: MLSLRTSISRIQPCLFIRASSYQTEATQPKFQDKIRIRIQGGDGGQGCSSFIKEKFRPYGPPDGGNGGDGGSVYVAVKPGSFNNLSHLSQIHKASNGTNGKGGNRHGSCGKSVILYVPPGTVIREISAVRSEQSLEWVQMPGKTKPPKLKKGQISFVSEATRHGKELLYYRASSMISGAAEYSLEECDTTPQILCYGGVGGLGNVHFLSENNRSPKFATKGLTGEQKLIELELKTICEIGLVGLPNAGKSTLLNCLTASKSKVGEYEFTTIYPKIGTIKTTMPDDHSSFQYRLADIPGIIKGASDGKGLGYDFLRHVERAKMLCLVIDINPKAKIPADQAFQLLWDELNKYEKNLINKVALVIANKADTAAEQDLLLLKAIVERTTKGVAVLPVSAKKQEGLEGLVRGMTQLLQQRLLV.

The region spanning 29-236 (PKFQDKIRIR…KLIELELKTI (208 aa)) is the Obg domain. Positions 237-414 (CEIGLVGLPN…LVRGMTQLLQ (178 aa)) constitute an OBG-type G domain. GTP contacts are provided by residues 243 to 250 (GLPNAGKS), 295 to 299 (DIPGI), and 364 to 367 (ANKA).

This sequence belongs to the TRAFAC class OBG-HflX-like GTPase superfamily. OBG GTPase family.

Its subcellular location is the mitochondrion. This is an uncharacterized protein from Schizosaccharomyces pombe (strain 972 / ATCC 24843) (Fission yeast).